We begin with the raw amino-acid sequence, 263 residues long: DNA repair protein RecO (263 aa).

The tract at residues 243–263 (DRKETARETVPTSDGTASNAV) is disordered. Polar residues predominate over residues 252-263 (VPTSDGTASNAV).

The protein belongs to the RecO family.

Its function is as follows. Involved in DNA repair and RecF pathway recombination. This is DNA repair protein RecO from Neisseria meningitidis serogroup C / serotype 2a (strain ATCC 700532 / DSM 15464 / FAM18).